A 224-amino-acid polypeptide reads, in one-letter code: MMTNLFSVFDPSAIFNFSLNWLSTFLGLLMIPSIYWLMPSRYNIMWNSILLTLHKEFKTLLGPSGHNGSTFIFISLFSLILFNNFMGLFPYIFTSTSHLTLTLSLALPLWLCFMLYGWINHTQHMFAHLVPQGTPAILMPFMVCIETISNIIRPGTLAVRLTANMIAGHLLLTLLGNTGPSMSYILVTFLLMAQIALLVLESAVAMIQSYVFAVLSTLYSSEVN.

The next 6 helical transmembrane spans lie at 17–37 (FSLN…IYWL), 72–92 (IFIS…FPYI), 99–119 (LTLT…YGWI), 125–145 (MFAH…MVCI), 166–186 (IAGH…SYIL), and 187–207 (VTFL…VAMI).

This sequence belongs to the ATPase A chain family. As to quaternary structure, F-type ATPases have 2 components, CF(1) - the catalytic core - and CF(0) - the membrane proton channel. CF(1) has five subunits: alpha(3), beta(3), gamma(1), delta(1), epsilon(1). CF(0) has three main subunits: a, b and c.

The protein resides in the mitochondrion inner membrane. In terms of biological role, mitochondrial membrane ATP synthase (F(1)F(0) ATP synthase or Complex V) produces ATP from ADP in the presence of a proton gradient across the membrane which is generated by electron transport complexes of the respiratory chain. F-type ATPases consist of two structural domains, F(1) - containing the extramembraneous catalytic core and F(0) - containing the membrane proton channel, linked together by a central stalk and a peripheral stalk. During catalysis, ATP synthesis in the catalytic domain of F(1) is coupled via a rotary mechanism of the central stalk subunits to proton translocation. Key component of the proton channel; it may play a direct role in the translocation of protons across the membrane. This chain is ATP synthase subunit a (mt:ATPase6), found in Drosophila melanogaster (Fruit fly).